The primary structure comprises 547 residues: MTKFVFVTGGVVSSIGKGIVAASLGRLLKSRNYSVSILKLDPYINVDPGTMSPFQHGEVFVTEDGAETDLDLGHYERFTDTSMSRLNSVTTGSIYQAVINKERRGAYMGGTVQVIPHITNEIKERIHRVAKNTNPDVVITEIGGTVGDIESLPFLEAIRQFRKDVGRNNVVYMHVTLIPWIPAAREMKTKPTQHSVKELRSIGIQPDVLVCRCDRPLKEGMKEKLSEFCDVPVESVITAQDASSIYEVPLIVEREGLAQQTLALLNLEPRQPNLTDWQTLVQRMQTPQRQIEIALVGKYVQLSDAYLSVVESLVHGGIAVNSEVKLNWVNAEDIEQYGAEKFLKDVSGILVPGGFGIRGVDGKVQAIQYARQQKIPFLGLCLGMQCAVIEWARNIARLERSNSAEFDPETPNPVINLLPEQEDVVDLGGTMRLGLYACRLSPDTLASSLYPQEVIYERHRHRYEFNNAYRSLLIETGYVVSGTSPDGRLVEIIELPGHPFFIATQFHPEFQSRPNSPHPLFLGFVKAAVDHYSTCLTEDEECEEVKE.

The amidoligase domain stretch occupies residues 1 to 267 (MTKFVFVTGG…AQQTLALLNL (267 aa)). Serine 13 contributes to the CTP binding site. Serine 13 is a binding site for UTP. ATP is bound by residues 14 to 19 (SIGKGI) and aspartate 71. Mg(2+)-binding residues include aspartate 71 and glutamate 141. Residues 148 to 150 (DIE), 188 to 193 (KTKPTQ), and lysine 224 contribute to the CTP site. Residues 188–193 (KTKPTQ) and lysine 224 contribute to the UTP site. Residues 292–534 (EIALVGKYVQ…VKAAVDHYST (243 aa)) enclose the Glutamine amidotransferase type-1 domain. An L-glutamine-binding site is contributed by glycine 354. The active-site Nucleophile; for glutamine hydrolysis is cysteine 381. L-glutamine-binding positions include 382-385 (LGMQ), glutamate 405, and arginine 462. Residues histidine 507 and glutamate 509 contribute to the active site.

This sequence belongs to the CTP synthase family. In terms of assembly, homotetramer.

The catalysed reaction is UTP + L-glutamine + ATP + H2O = CTP + L-glutamate + ADP + phosphate + 2 H(+). The enzyme catalyses L-glutamine + H2O = L-glutamate + NH4(+). It carries out the reaction UTP + NH4(+) + ATP = CTP + ADP + phosphate + 2 H(+). Its pathway is pyrimidine metabolism; CTP biosynthesis via de novo pathway; CTP from UDP: step 2/2. Allosterically activated by GTP, when glutamine is the substrate; GTP has no effect on the reaction when ammonia is the substrate. The allosteric effector GTP functions by stabilizing the protein conformation that binds the tetrahedral intermediate(s) formed during glutamine hydrolysis. Inhibited by the product CTP, via allosteric rather than competitive inhibition. Catalyzes the ATP-dependent amination of UTP to CTP with either L-glutamine or ammonia as the source of nitrogen. Regulates intracellular CTP levels through interactions with the four ribonucleotide triphosphates. The chain is CTP synthase from Rippkaea orientalis (strain PCC 8801 / RF-1) (Cyanothece sp. (strain PCC 8801)).